We begin with the raw amino-acid sequence, 71 residues long: U3-scytotoxin-Sth1h (71 aa).

The signal sequence occupies residues 1-33 (MSQNSITSYKMGFAKHFFLFAVLLCATAMYSVA). The propeptide occupies 34–39 (EPAQER). 3 disulfides stabilise this stretch: Cys-46-Cys-60, Cys-53-Cys-64, and Cys-59-Cys-69.

As to expression, expressed by the venom gland.

The protein localises to the secreted. In terms of biological role, probable insect neurotoxin with ion channel impairing activity. Does not show activity on 45 human receptors from 9 families (5-hydroxytryptamine, adrenergic, dopamine, muscarinic, histamine, neurotransmitter, opioid, sigma, and gaba(A) receptors). In vivo, when mixed with U3-SYTX-Sth1a does not cause paralytic or lethal activity when injected into crickets. It is noteworthy that crickets are evolutionarily distant from prey species. The chain is U3-scytotoxin-Sth1h from Scytodes thoracica (Spitting spider).